Consider the following 274-residue polypeptide: 2,3,4,5-tetrahydropyridine-2,6-dicarboxylate N-succinyltransferase (274 aa).

Substrate-binding residues include Arg107 and Asp144.

The protein belongs to the transferase hexapeptide repeat family. Homotrimer.

It is found in the cytoplasm. It catalyses the reaction (S)-2,3,4,5-tetrahydrodipicolinate + succinyl-CoA + H2O = (S)-2-succinylamino-6-oxoheptanedioate + CoA. It functions in the pathway amino-acid biosynthesis; L-lysine biosynthesis via DAP pathway; LL-2,6-diaminopimelate from (S)-tetrahydrodipicolinate (succinylase route): step 1/3. In Cereibacter sphaeroides (strain ATCC 17023 / DSM 158 / JCM 6121 / CCUG 31486 / LMG 2827 / NBRC 12203 / NCIMB 8253 / ATH 2.4.1.) (Rhodobacter sphaeroides), this protein is 2,3,4,5-tetrahydropyridine-2,6-dicarboxylate N-succinyltransferase.